Reading from the N-terminus, the 465-residue chain is Putative F-box/FBD/LRR-repeat protein At1g22000 (465 aa).

Residues 28–74 (ETRICALPDDLLLQILPHVPTKEAVATSILSKQWRYVWLMLPKLEFK) enclose the F-box domain. 5 LRR repeats span residues 154–181 (CLTLSNQILVDVSSPASLPSLLDLSLHY), 182–207 (VVYKDDGSLVRLLSSSPVLKRLSVHS), 210–230 (DDNLKTFTVKVSSLESLNYDE), 248–273 (NEVEVDDLNGSLVIDSPALKELHLSE), and 339–365 (ISLVDWLMPLMFLLQNSPKLKTPTIDN). The region spanning 373-424 (SWNQPSSIPGCLLSHLETFRWRGYGGREDAKKLLMTYILANSKCLKTVEISL) is the FBD domain.

The sequence is that of Putative F-box/FBD/LRR-repeat protein At1g22000 from Arabidopsis thaliana (Mouse-ear cress).